Consider the following 312-residue polypeptide: MLQYQIDRIEHQVEEDRSQSGVFLIGPLERGQATTLGNALRRVLMGGLEGSAVTAIRIAGVNHEYATVPGVREDVLDILLNCKELSVNSRSPELEIGRLVVAGPAEVTAKDLQFSSQVEVVDGNRSIATVADGYSLELEVHVERGVGYRPVDRHSEDTSAIDLLQIDAVFMPVIRVNFTIDETAVAEGGSARERLRMEIVTDGSITPDDALAQSANYLIELFQPLATVTLVEEPGIEPEPSAEAQIPLEELNLSVRAYNCLKRAQVNSVSDLMGFSYEDLLEIKNFGSKSADEVIEALERIGISIPQSRTSA.

Residues methionine 1 to threonine 229 form an alpha N-terminal domain (alpha-NTD) region. The segment at isoleucine 246–alanine 312 is alpha C-terminal domain (alpha-CTD).

The protein belongs to the RNA polymerase alpha chain family. In terms of assembly, in cyanobacteria the RNAP catalytic core is composed of 2 alpha, 1 beta, 1 beta', 1 gamma and 1 omega subunit. When a sigma factor is associated with the core the holoenzyme is formed, which can initiate transcription.

It carries out the reaction RNA(n) + a ribonucleoside 5'-triphosphate = RNA(n+1) + diphosphate. In terms of biological role, DNA-dependent RNA polymerase catalyzes the transcription of DNA into RNA using the four ribonucleoside triphosphates as substrates. This chain is DNA-directed RNA polymerase subunit alpha, found in Parasynechococcus marenigrum (strain WH8102).